Here is a 251-residue protein sequence, read N- to C-terminus: Cholesterol 25-hydroxylase-like protein (251 aa).

Helical transmembrane passes span 22–42 (FFPV…FVLL), 69–89 (WSCL…LSVL), and 108–128 (VVWD…VWHL). In terms of domain architecture, Fatty acid hydroxylase spans 113–247 (AACLLLFDFQ…FTHWDKLFGT (135 aa)). The short motif at 126 to 130 (WHLLH) is the Histidine box-1 element. Positions 141-145 (HKVHH) match the Histidine box-2 motif. Positions 222 to 228 (HHDVHHQ) match the Histidine box-3 motif.

Belongs to the sterol desaturase family. Fe cation is required as a cofactor.

Its subcellular location is the endoplasmic reticulum membrane. It carries out the reaction cholesterol + AH2 + O2 = 25-hydroxycholesterol + A + H2O. The enzyme catalyses cholesterol + NADPH + O2 + H(+) = 25-hydroxycholesterol + NADP(+) + H2O. Catalyzes the formation of 25-hydroxycholesterol from cholesterol, leading to repress cholesterol biosynthetic enzymes. Plays a key role in cell positioning and movement in lymphoid tissues: 25-hydroxycholesterol is an intermediate in biosynthesis of 7-alpha,25-dihydroxycholesterol (7-alpha,25-OHC), an oxysterol that acts as a ligand for the G protein-coupled receptor GPR183/EBI2, a chemotactic receptor for a number of lymphoid cells. May play an important role in regulating lipid metabolism by synthesizing a corepressor that blocks sterol regulatory element binding protein (SREBP) processing. In testis, production of 25-hydroxycholesterol by macrophages may play a role in Leydig cell differentiation. This chain is Cholesterol 25-hydroxylase-like protein (ch25h), found in Danio rerio (Zebrafish).